Reading from the N-terminus, the 359-residue chain is tRNA N6-adenosine threonylcarbamoyltransferase (359 aa).

Positions 115 and 119 each coordinate Fe cation. Residues 137–141, aspartate 170, glycine 183, and asparagine 283 each bind substrate; that span reads LVSGG. Position 311 (aspartate 311) interacts with Fe cation. The interval 328–359 is disordered; sequence APDSLDIAPRSRWPLDEKSAPVFGTGRRGAKA.

Belongs to the KAE1 / TsaD family. The cofactor is Fe(2+).

The protein localises to the cytoplasm. It carries out the reaction L-threonylcarbamoyladenylate + adenosine(37) in tRNA = N(6)-L-threonylcarbamoyladenosine(37) in tRNA + AMP + H(+). Its function is as follows. Required for the formation of a threonylcarbamoyl group on adenosine at position 37 (t(6)A37) in tRNAs that read codons beginning with adenine. Is involved in the transfer of the threonylcarbamoyl moiety of threonylcarbamoyl-AMP (TC-AMP) to the N6 group of A37, together with TsaE and TsaB. TsaD likely plays a direct catalytic role in this reaction. This chain is tRNA N6-adenosine threonylcarbamoyltransferase, found in Brucella suis (strain ATCC 23445 / NCTC 10510).